We begin with the raw amino-acid sequence, 512 residues long: Kynurenine 3-monooxygenase (512 aa).

This sequence belongs to the aromatic-ring hydroxylase family. KMO subfamily. FAD serves as cofactor.

It is found in the mitochondrion outer membrane. The enzyme catalyses L-kynurenine + NADPH + O2 + H(+) = 3-hydroxy-L-kynurenine + NADP(+) + H2O. Its pathway is cofactor biosynthesis; NAD(+) biosynthesis; quinolinate from L-kynurenine: step 1/3. Catalyzes the hydroxylation of L-kynurenine (L-Kyn) to form 3-hydroxy-L-kynurenine (L-3OHKyn). Required for synthesis of quinolinic acid. The polypeptide is Kynurenine 3-monooxygenase (bna4) (Aspergillus clavatus (strain ATCC 1007 / CBS 513.65 / DSM 816 / NCTC 3887 / NRRL 1 / QM 1276 / 107)).